Consider the following 72-residue polypeptide: Translation initiation factor IF-1 (72 aa).

Residues 1–72 (MAKEDTIQMQ…TRARIVFRAR (72 aa)) form the S1-like domain.

Belongs to the IF-1 family. In terms of assembly, component of the 30S ribosomal translation pre-initiation complex which assembles on the 30S ribosome in the order IF-2 and IF-3, IF-1 and N-formylmethionyl-tRNA(fMet); mRNA recruitment can occur at any time during PIC assembly.

Its subcellular location is the cytoplasm. In terms of biological role, one of the essential components for the initiation of protein synthesis. Stabilizes the binding of IF-2 and IF-3 on the 30S subunit to which N-formylmethionyl-tRNA(fMet) subsequently binds. Helps modulate mRNA selection, yielding the 30S pre-initiation complex (PIC). Upon addition of the 50S ribosomal subunit IF-1, IF-2 and IF-3 are released leaving the mature 70S translation initiation complex. The protein is Translation initiation factor IF-1 of Neisseria gonorrhoeae (strain ATCC 700825 / FA 1090).